Here is a 240-residue protein sequence, read N- to C-terminus: Small ribosomal subunit protein uS3 (240 aa).

The KH type-2 domain maps to 39–109 (IRQYIEKTLN…QIRVNVIEVP (71 aa)). A disordered region spans residues 219 to 240 (APPSQPRRKSRRQQFDDRSQDG). The segment covering 231-240 (QQFDDRSQDG) has biased composition (basic and acidic residues).

It belongs to the universal ribosomal protein uS3 family. As to quaternary structure, part of the 30S ribosomal subunit. Forms a tight complex with proteins S10 and S14.

Its function is as follows. Binds the lower part of the 30S subunit head. Binds mRNA in the 70S ribosome, positioning it for translation. This is Small ribosomal subunit protein uS3 from Synechocystis sp. (strain ATCC 27184 / PCC 6803 / Kazusa).